We begin with the raw amino-acid sequence, 328 residues long: C-type lectin domain family 4 member K (328 aa).

Residues 1 to 43 (MTVEKEAPDAHFTVDKQNISLWPREPPPKSGPSLVPGKTPTVR) are Cytoplasmic-facing. Residues 44 to 64 (AALICLTLVLVASVLLQAVLY) traverse the membrane as a helical; Signal-anchor for type II membrane protein segment. At 65–328 (PRFMGTISDV…CKRPYVPSEP (264 aa)) the chain is on the extracellular side. N-linked (GlcNAc...) asparagine glycans are attached at residues N87, N113, and N180. Positions 145 to 190 (EEVSTLNAQIPELKSDLEKASALNTKIRALQGSLENMSKLLKRQND) form a coiled coil. One can recognise a C-type lectin domain in the interval 202–320 (FKGNFYYFSL…CDKTFLFICK (119 aa)). Cystine bridges form between C223-C319 and C295-C311.

In terms of assembly, homotrimer. Exclusively expressed by Langerhans cells. Expressed in astrocytoma and malignant ependymoma, but not in normal brain tissues.

Its subcellular location is the membrane. Its function is as follows. Calcium-dependent lectin displaying mannose-binding specificity. Induces the formation of Birbeck granules (BGs); is a potent regulator of membrane superimposition and zippering. Binds to sulfated as well as mannosylated glycans, keratan sulfate (KS) and beta-glucans. Facilitates uptake of antigens and is involved in the routing and/or processing of antigen for presentation to T cells. Major receptor on primary Langerhans cells for Candida species, Saccharomyces species, and Malassezia furfur. Protects against human immunodeficiency virus-1 (HIV-1) infection. Binds to high-mannose structures present on the envelope glycoprotein which is followed by subsequent targeting of the virus to the Birbeck granules leading to its rapid degradation. This Homo sapiens (Human) protein is C-type lectin domain family 4 member K (CD207).